A 120-amino-acid polypeptide reads, in one-letter code: DNA-binding protein HQ_1105A (120 aa).

The segment at 1 to 55 (MSETPDDLDELRQQRMEELRDQADGQQSQTSDNTAAAQEAAREKAEAQQEALLKQ) is disordered. A compositionally biased stretch (basic and acidic residues) spans 10–23 (ELRQQRMEELRDQA). A compositionally biased stretch (polar residues) spans 24–34 (DGQQSQTSDNT).

This sequence belongs to the PDCD5 family.

This chain is DNA-binding protein HQ_1105A, found in Haloquadratum walsbyi (strain DSM 16790 / HBSQ001).